A 340-amino-acid polypeptide reads, in one-letter code: Ribonucleoside-diphosphate reductase subunit beta (340 aa).

Fe cation-binding residues include Asp88 and His122. The active site involves Tyr126. His216 provides a ligand contact to Fe cation.

The protein belongs to the ribonucleoside diphosphate reductase small chain family. In terms of assembly, tetramer of two alpha and two beta subunits. Fe cation serves as cofactor.

The enzyme catalyses a 2'-deoxyribonucleoside 5'-diphosphate + [thioredoxin]-disulfide + H2O = a ribonucleoside 5'-diphosphate + [thioredoxin]-dithiol. In terms of biological role, provides the precursors necessary for DNA synthesis. Catalyzes the biosynthesis of deoxyribonucleotides from the corresponding ribonucleotides. The chain is Ribonucleoside-diphosphate reductase subunit beta (nrdF) from Mycoplasma genitalium (strain ATCC 33530 / DSM 19775 / NCTC 10195 / G37) (Mycoplasmoides genitalium).